The chain runs to 129 residues: Large ribosomal subunit protein bL17 (129 aa).

The protein belongs to the bacterial ribosomal protein bL17 family. As to quaternary structure, part of the 50S ribosomal subunit. Contacts protein L32.

This Desulfotalea psychrophila (strain LSv54 / DSM 12343) protein is Large ribosomal subunit protein bL17.